We begin with the raw amino-acid sequence, 382 residues long: Bifunctional enzyme IspD/IspF (382 aa).

Residues 1 to 225 (MTFSVVIVAA…EHLAGVARVT (225 aa)) are 2-C-methyl-D-erythritol 4-phosphate cytidylyltransferase. The tract at residues 226 to 382 (RVGQGFDAHR…SAVVAVETPA (157 aa)) is 2-C-methyl-D-erythritol 2,4-cyclodiphosphate synthase. 2 residues coordinate a divalent metal cation: aspartate 232 and histidine 234. 4-CDP-2-C-methyl-D-erythritol 2-phosphate contacts are provided by residues 232 to 234 (DAH) and 258 to 259 (HS). A divalent metal cation is bound at residue histidine 266. Residues 280–282 (DIG), 356–359 (TTTE), phenylalanine 363, and arginine 366 contribute to the 4-CDP-2-C-methyl-D-erythritol 2-phosphate site.

This sequence in the N-terminal section; belongs to the IspD/TarI cytidylyltransferase family. IspD subfamily. In the C-terminal section; belongs to the IspF family. A divalent metal cation is required as a cofactor.

The enzyme catalyses 2-C-methyl-D-erythritol 4-phosphate + CTP + H(+) = 4-CDP-2-C-methyl-D-erythritol + diphosphate. It catalyses the reaction 4-CDP-2-C-methyl-D-erythritol 2-phosphate = 2-C-methyl-D-erythritol 2,4-cyclic diphosphate + CMP. It functions in the pathway isoprenoid biosynthesis; isopentenyl diphosphate biosynthesis via DXP pathway; isopentenyl diphosphate from 1-deoxy-D-xylulose 5-phosphate: step 2/6. Its pathway is isoprenoid biosynthesis; isopentenyl diphosphate biosynthesis via DXP pathway; isopentenyl diphosphate from 1-deoxy-D-xylulose 5-phosphate: step 4/6. Its function is as follows. Bifunctional enzyme that catalyzes the formation of 4-diphosphocytidyl-2-C-methyl-D-erythritol from CTP and 2-C-methyl-D-erythritol 4-phosphate (MEP) (IspD), and catalyzes the conversion of 4-diphosphocytidyl-2-C-methyl-D-erythritol 2-phosphate (CDP-ME2P) to 2-C-methyl-D-erythritol 2,4-cyclodiphosphate (ME-CPP) with a corresponding release of cytidine 5-monophosphate (CMP) (IspF). This is Bifunctional enzyme IspD/IspF from Caulobacter vibrioides (strain ATCC 19089 / CIP 103742 / CB 15) (Caulobacter crescentus).